We begin with the raw amino-acid sequence, 108 residues long: Thiosulfate sulfurtransferase GlpE (108 aa).

Residues 18–106 (ENEGATLADI…WERSGLPIET (89 aa)) form the Rhodanese domain. Cys66 acts as the Cysteine persulfide intermediate in catalysis.

It belongs to the GlpE family.

The protein localises to the cytoplasm. The catalysed reaction is thiosulfate + hydrogen cyanide = thiocyanate + sulfite + 2 H(+). The enzyme catalyses thiosulfate + [thioredoxin]-dithiol = [thioredoxin]-disulfide + hydrogen sulfide + sulfite + 2 H(+). Transferase that catalyzes the transfer of sulfur from thiosulfate to thiophilic acceptors such as cyanide or dithiols. May function in a CysM-independent thiosulfate assimilation pathway by catalyzing the conversion of thiosulfate to sulfite, which can then be used for L-cysteine biosynthesis. In Actinobacillus pleuropneumoniae serotype 7 (strain AP76), this protein is Thiosulfate sulfurtransferase GlpE.